The sequence spans 80 residues: Exodeoxyribonuclease 7 small subunit (80 aa).

Belongs to the XseB family. Heterooligomer composed of large and small subunits.

The protein resides in the cytoplasm. The catalysed reaction is Exonucleolytic cleavage in either 5'- to 3'- or 3'- to 5'-direction to yield nucleoside 5'-phosphates.. Functionally, bidirectionally degrades single-stranded DNA into large acid-insoluble oligonucleotides, which are then degraded further into small acid-soluble oligonucleotides. In Rickettsia felis (strain ATCC VR-1525 / URRWXCal2) (Rickettsia azadi), this protein is Exodeoxyribonuclease 7 small subunit.